We begin with the raw amino-acid sequence, 751 residues long: Fusarisetin A cluster transcription factor fsa6 (751 aa).

A disordered region spans residues 1–35; sequence MADQAQDVRPTEWGPGKTPQGRARLPSSRPREKPQ. The zn(2)-C6 fungal-type DNA-binding region spans 38-66; the sequence is CNLCRRRKLRCDRQRPCSSCAQRELGLSC. Residues 107-116 show a composition bias toward polar residues; that stretch reads NVNAQDQVGA. Residues 107–153 form a disordered region; the sequence is NVNAQDQVGATPSPRGQPRGPDYPTPAAVHAPSTNEEPVSAAVSPAD.

The protein localises to the nucleus. Transcription factor that regulates the expression of the gene cluster that mediates the biosynthesis of fusarisetin A. This Fusarium sp. (strain FN080326) protein is Fusarisetin A cluster transcription factor fsa6.